A 368-amino-acid polypeptide reads, in one-letter code: Peptide chain release factor 2 (368 aa).

Residues 36 to 56 form a disordered region; it reads EAQAGDPSLWDDPDHAQKVTS. Q250 is subject to N5-methylglutamine.

It belongs to the prokaryotic/mitochondrial release factor family. Post-translationally, methylated by PrmC. Methylation increases the termination efficiency of RF2.

It localises to the cytoplasm. In terms of biological role, peptide chain release factor 2 directs the termination of translation in response to the peptide chain termination codons UGA and UAA. The chain is Peptide chain release factor 2 from Corynebacterium aurimucosum (strain ATCC 700975 / DSM 44827 / CIP 107346 / CN-1) (Corynebacterium nigricans).